Reading from the N-terminus, the 788-residue chain is Integrin beta-6 (788 aa).

The signal sequence occupies residues 1–21 (MGIELLCLFFLCLGRNDHVQG). In terms of domain architecture, PSI spans 22-71 (GCAVGGAETCEDCLLIGPQCAWCSQENFTHLSGVGERCDTPANLLAKGCQ). Over 22 to 709 (GCAVGGAETC…KDCPKPPNIP (688 aa)) the chain is Extracellular. Cystine bridges form between C23/C41, C31/C454, C34/C59, C44/C70, C197/C204, C252/C293, C394/C406, C426/C452, C456/C476, C467/C479, C481/C490, C492/C519, C502/C517, C511/C522, C524/C537, C539/C560, C544/C558, C552/C563, and C565/C574. N-linked (GlcNAc...) asparagine glycosylation is found at N48 and N97. Residues 131–371 (YPVDLYYLMD…QLIISAYEEL (241 aa)) enclose the VWFA domain. D140, S142, and S144 together coordinate Mg(2+). Ca(2+) is bound by residues S144, D147, D148, and E179. Ca(2+) contacts are provided by N235, D237, P239, and E240. E240 lines the Mg(2+) pocket. N-linked (GlcNAc...) asparagine glycosylation occurs at N260. 2 residues coordinate Ca(2+): D271 and K355. N-linked (GlcNAc...) asparagine glycosylation occurs at N387. An N-linked (GlcNAc...) asparagine glycan is attached at N418. 4 I-EGF domains span residues 456 to 491 (CQKE…HHCE), 492 to 538 (CGED…PYCQ), 539 to 575 (CDNF…EYCN), and 576 to 615 (CTTS…PTCE). 2 N-linked (GlcNAc...) asparagine glycosylation sites follow: N463 and N471. N-linked (GlcNAc...) asparagine glycosylation is present at N541. N575 is a glycosylation site (N-linked (GlcNAc...) asparagine). 9 disulfide bridges follow: C576–C599, C583–C597, C591–C602, C604–C614, C617–C620, C624–C670, C630–C649, C633–C645, and C678–C702. A helical transmembrane segment spans residues 710–730 (MIMLGVSLAILLIGVVLLCIW). Positions 731 to 758 (KLLVSFHDRKEVAKFEAERSKAKWQTGT) are interaction with HAX1. The Cytoplasmic portion of the chain corresponds to 731–788 (KLLVSFHDRKEVAKFEAERSKAKWQTGTNPLYRGSTSTFKNVTYKHKEKQKVDLSTDG).

This sequence belongs to the integrin beta chain family. In terms of assembly, heterodimer of an alpha and a beta subunit. Interacts with FLNB. Interacts with HAX1. ITGAV:ITGB6 interacts with FBN1. ITGAV:ITGB6 interacts with TGFB1.

The protein resides in the cell membrane. The protein localises to the cell junction. It is found in the focal adhesion. In terms of biological role, integrin alpha-V:beta-6 (ITGAV:ITGB6) is a receptor for fibronectin and cytotactin. It recognizes the sequence R-G-D in its ligands. ITGAV:ITGB6 acts as a receptor for fibrillin-1 (FBN1) and mediates R-G-D-dependent cell adhesion to FBN1. Integrin alpha-V:beta-6 (ITGAV:ITGB6) mediates R-G-D-dependent release of transforming growth factor beta-1 (TGF-beta-1) from regulatory Latency-associated peptide (LAP), thereby playing a key role in TGF-beta-1 activation. The polypeptide is Integrin beta-6 (ITGB6) (Bos taurus (Bovine)).